A 1401-amino-acid polypeptide reads, in one-letter code: Kinesin-like protein KIF27 (1401 aa).

A Kinesin motor domain is found at 5–341 (PVKVAVRIRP…LKYANRARNI (337 aa)). 84–91 (GQTGSGKT) is an ATP binding site. 2 coiled-coil regions span residues 352 to 413 (ESDR…GYQC) and 489 to 557 (LAAD…KLNL). Phosphoserine occurs at positions 643, 646, 672, 675, and 704. The interval 643–662 (SDNSDDEESEGQEKSGTRCR) is disordered. 4 coiled-coil regions span residues 705–886 (QELN…IQLK), 916–1070 (DHLQ…AAIE), 1118–1154 (NKVV…LESA), and 1190–1219 (EGIM…TSRD). S999 is subject to Phosphoserine. The segment covering 1259–1280 (EELKWASRPESMKLSGREREMD) has biased composition (basic and acidic residues). Positions 1259-1332 (EELKWASRPE…TETDDNQFTK (74 aa)) are disordered. Polar residues predominate over residues 1281 to 1292 (SSASSLRTQPNP). S1367 and S1389 each carry phosphoserine.

This sequence belongs to the TRAFAC class myosin-kinesin ATPase superfamily. Kinesin family. KIF27 subfamily. As to quaternary structure, interacts with STK36. Testis, pancreatic islet, germ cell tumors and Jurkat T-cells.

It is found in the cytoplasm. The protein resides in the cytoskeleton. It localises to the cell projection. The protein localises to the cilium. Its function is as follows. Plays an essential role in motile ciliogenesis. The chain is Kinesin-like protein KIF27 (KIF27) from Homo sapiens (Human).